Here is a 159-residue protein sequence, read N- to C-terminus: MFNKIPMTLRGFNKLKSELKKLKYITRPCIVKAIANARQLGDLKENAEYHSAREEQSFCENRICEIENKLLRAQIIDITKIPFKGIVIFGSTVTVLQISTSNIFVYTIVGDDEANYKEFSISIHSPMSRALIGKKKNDIIKVNTPTGYIKYIIKKIEYI.

The protein belongs to the GreA/GreB family.

In terms of biological role, necessary for efficient RNA polymerase transcription elongation past template-encoded arresting sites. The arresting sites in DNA have the property of trapping a certain fraction of elongating RNA polymerases that pass through, resulting in locked ternary complexes. Cleavage of the nascent transcript by cleavage factors such as GreA or GreB allows the resumption of elongation from the new 3'terminus. GreA releases sequences of 2 to 3 nucleotides. This Buchnera aphidicola subsp. Cinara cedri (strain Cc) protein is Transcription elongation factor GreA.